The following is a 150-amino-acid chain: Large ribosomal subunit protein bL9 (150 aa).

Belongs to the bacterial ribosomal protein bL9 family.

Its function is as follows. Binds to the 23S rRNA. This is Large ribosomal subunit protein bL9 from Streptococcus pneumoniae (strain CGSP14).